We begin with the raw amino-acid sequence, 100 residues long: Large ribosomal subunit protein bL21 (100 aa).

This sequence belongs to the bacterial ribosomal protein bL21 family. Part of the 50S ribosomal subunit. Contacts protein L20.

Functionally, this protein binds to 23S rRNA in the presence of protein L20. This is Large ribosomal subunit protein bL21 from Wolbachia sp. subsp. Drosophila simulans (strain wRi).